Reading from the N-terminus, the 528-residue chain is Nucleobase-ascorbate transporter 5 (528 aa).

Residues 1 to 20 (MSAPKSGGDPLPHPPKEQLP) are disordered. A run of 12 helical transmembrane segments spans residues 35-55 (AVLLGFQHYLVMLGTTVLIPS), 71-91 (LIQTILFVAGLNTLLQTVFGT), 93-113 (LPAVIGASYTFVPVTISIMLS), 133-153 (TQGALIVASTLQIILGFSGLW), 159-179 (FLSPLSAAPLVGLVGYGLYEL), 181-201 (FPGVAKCIEIGLPGLIILILI), 219-239 (FAVIFSVAIVWLYAFFLTLGG), 285-305 (FAMMMASFVALVESTGAFIAV), 367-387 (AGFMIFFSILGKFGAVFASIP), 390-410 (IIAALYCLFFAYVGAGGLSLL), 418-438 (FRTLFILGFSIFLGLSIPQYF), and 460-479 (MVNVPFSSKAFVGGCVAYLL).

It belongs to the nucleobase:cation symporter-2 (NCS2) (TC 2.A.40) family. In terms of tissue distribution, weakly expressed in the vasculature of developing leaves.

The protein resides in the membrane. In Arabidopsis thaliana (Mouse-ear cress), this protein is Nucleobase-ascorbate transporter 5 (NAT5).